The sequence spans 862 residues: DNA replication licensing factor MCM4 (862 aa).

Residues 1-12 show a composition bias toward gly residues; the sequence is MASRGGGGGGDG. Positions 1–132 are disordered; the sequence is MASRGGGGGG…GGGGGGAGAD (132 aa). Low complexity-rich tracts occupy residues 20 to 41 and 52 to 64; these read SSPD…PQSG and SASP…SLGG. Residues 289–317 form a C4-type zinc finger; that stretch reads CLVCGFYSEPVMVDRGRVTEPHICQKEQC. An MCM domain is found at 453–659; it reads IYDRLTRSLA…QTDRRLAKHI (207 aa). 503–510 contributes to the ATP binding site; sequence GDPGTSKS. The Arginine finger signature appears at 635-638; sequence SRFD.

Belongs to the MCM family. As to quaternary structure, component of the minichromosome maintenance (MCM) complex, a heterotetramer composed of MCM2, MCM3, MCM4, MCM5, MCM6 and MCM7.

The protein resides in the nucleus. The catalysed reaction is ATP + H2O = ADP + phosphate + H(+). Functionally, probable component of the MCM2-7 complex (MCM complex) that may function as a DNA helicase and which is essential to undergo a single round of replication initiation and elongation per cell cycle in eukaryotic cells. This is DNA replication licensing factor MCM4 (MCM4) from Oryza sativa subsp. japonica (Rice).